Reading from the N-terminus, the 84-residue chain is U4-theraphotoxin-Hhn1aa (84 aa).

An N-terminal signal peptide occupies residues 1–22 (MKVTLIAILTCAAVLVLHTTAA). Positions 23-47 (EELEESQLMEVGMPDTELAAVDEER) are excised as a propeptide. Intrachain disulfides connect Cys-51/Cys-65 and Cys-55/Cys-76.

It belongs to the neurotoxin 12 (Hwtx-2) family. 02 (Hwtx-2) subfamily. Expressed by the venom gland.

The protein localises to the secreted. Its function is as follows. Postsynaptic neurotoxin. The protein is U4-theraphotoxin-Hhn1aa of Cyriopagopus hainanus (Chinese bird spider).